Reading from the N-terminus, the 148-residue chain is Large ribosomal subunit protein bL9 (148 aa).

The protein belongs to the bacterial ribosomal protein bL9 family.

Its function is as follows. Binds to the 23S rRNA. The polypeptide is Large ribosomal subunit protein bL9 (Listeria monocytogenes serotype 4b (strain CLIP80459)).